A 1109-amino-acid polypeptide reads, in one-letter code: DNA mismatch repair protein MSH7 (1109 aa).

Disordered regions lie at residues 19-45 (TKGL…KEGD) and 61-86 (DEVR…KPAE). Positions 61–74 (DEVRGTDTPPEKVP) are enriched in basic and acidic residues. Residue 853–860 (GPNMGGKS) participates in ATP binding.

The protein belongs to the DNA mismatch repair MutS family. Heterodimer consisting of MSH2-MSH7 (MutS gamma).

The protein localises to the nucleus. Component of the post-replicative DNA mismatch repair system (MMR). Forms the heterodimer MutS gamma (MSH2-MSH7 heterodimer) which binds to DNA mismatches thereby initiating DNA repair. MutS gamma recognizes specifically the T/G single base mismatch, but not trinucleotide insertion-deletion loops (IDL). In Arabidopsis thaliana (Mouse-ear cress), this protein is DNA mismatch repair protein MSH7 (MSH7).